A 711-amino-acid chain; its full sequence is Polyribonucleotide nucleotidyltransferase (711 aa).

Mg(2+)-binding residues include D486 and D492. Residues P553–I612 enclose the KH domain. The region spanning G622 to K690 is the S1 motif domain. Positions I689 to E711 are disordered. The segment covering E694–E711 has biased composition (low complexity).

It belongs to the polyribonucleotide nucleotidyltransferase family. In terms of assembly, component of the RNA degradosome, which is a multiprotein complex involved in RNA processing and mRNA degradation. Mg(2+) is required as a cofactor.

Its subcellular location is the cytoplasm. The enzyme catalyses RNA(n+1) + phosphate = RNA(n) + a ribonucleoside 5'-diphosphate. In terms of biological role, involved in mRNA degradation. Catalyzes the phosphorolysis of single-stranded polyribonucleotides processively in the 3'- to 5'-direction. In Shigella boydii serotype 4 (strain Sb227), this protein is Polyribonucleotide nucleotidyltransferase.